We begin with the raw amino-acid sequence, 816 residues long: Coiled-coil and C2 domain-containing protein 1-like (816 aa).

Over residues 1 to 11 the composition is skewed to basic and acidic residues; that stretch reads MFSRKKPEPAK. Disordered regions lie at residues 1–135, 157–176, and 186–269; these read MFSR…TFLP, ANAK…RGLK, and AAGK…RQTD. A compositionally biased stretch (acidic residues) spans 25–47; it reads IPDDFDPSAGYGEDDGGDSDLEA. Residues 73-85 are compositionally biased toward basic and acidic residues; that stretch reads DLDKMIADSLRDV. A compositionally biased stretch (acidic residues) spans 86-100; the sequence is SDDDDDDNLESDPDL. Over residues 122-131 the composition is skewed to low complexity; it reads PPAASEEPVQ. Residues 145-200 are DM14 1; that stretch reads IKQRLEMYKQAEANAKTAGDSGKARRFGRGLKTLKDLHRQAAAGKSINVDDIPPEV. The segment covering 220-243 has biased composition (pro residues); sequence PSTPASPPPVPSRAAPDPPTPGTP. DM14 stretches follow at residues 265–317 and 365–419; these read SRQT…MPPP and LQQR…LPVP. A coiled-coil region spans residues 355–382; sequence LAAATNMLEALQQRLEKYQSVEAAAKAE. Residues 418–492 form a disordered region; sequence VPPGFGPLPT…TRTSGNQQKN (75 aa). A compositionally biased stretch (low complexity) spans 424 to 433; it reads PLPTADAAPV. The span at 434–449 shows a compositional bias: pro residues; the sequence is APTPSLPTSPTSPPPT. The segment covering 450-471 has biased composition (low complexity); sequence ASTSAGGTPSSSSATTPTAPRK. A compositionally biased stretch (polar residues) spans 483-492; the sequence is TRTSGNQQKN. The DM14 4 stretch occupies residues 502 to 556; it reads LLERQKEFKLAAIEAKKAGEIDQAKEYLKIFKGFDSLLNAASSGLPVDLSTLPVP. A C2 domain is found at 637-776; the sequence is RKNEPLPKFH…ETKCEIHDTY (140 aa).

Belongs to the CC2D1 family. As to quaternary structure, interacts (via DM14 domains 1 and 3) with shrb; the interaction is direct and blocks access to the surface involved in shrb polymerization. This interaction may be required for the ESCRT-III complex role in multivesicular body formation.

The protein localises to the cytoplasm. It is found in the cytosol. Its subcellular location is the apicolateral cell membrane. The protein resides in the cell cortex. It localises to the endosome. Phosphatidyl inositol monophosphate binding protein involved in endosomal protein sorting through regulation of the endosomal sorting required for transport (ESCRT) pathway. Required for full activity of the ESCRT-III complex core component shrb/shrub, probably by preventing its inappropriate polymerisation. Required, but not essential, for the efficient generation of intraluminal vesicles (ILVs) in multivesicular bodies (MVBs). Involved in a late stage of the endosomal pathway targeting transmembrane proteins of the plasma membrane for lysosomal degradation. Plays a critical role in regulation of multiple signal transduction pathways, including the Notch and BMP/decapentaplegic (dpp) signaling pathways, through targeting of membrane bound receptors to multivesicular bodies, isolating them from the cytoplasm and targeting them for lysosomal degradation. Involved in targeting N/Notch for endosomal degradation, negatively regulating the Notch signaling pathway. Regulates Notch signaling in imaginal disk cells and follicle cells during oogenesis and multiple developmental processes, including development of wings, veins, legs, eyes and bristles. Restricts the activity of Notch to the dorsoventral (D/V) boundary of the wing imaginal disk. In external sensory organ development regulates Notch signaling during asymmetric cell division and differentiation of sensory organ precursor cells. May be involved in regulation of apoptosis and cell growth independent of Notch signaling. Involved in targeting tkv for endosomal degradation, negatively regulating the BMP/decapentaplegic (dpp) signaling pathway. Regulates the BMP/dpp signaling pathway in follicle cells during oogenesis, but not in imaginal disk cells during wing development. May be involved in differentiation or morphogenesis of peripodial epithelial cells in the developing imaginal disk. Involved in abscission of germline cells during oogenesis. The sequence is that of Coiled-coil and C2 domain-containing protein 1-like from Drosophila melanogaster (Fruit fly).